The primary structure comprises 443 residues: Tubulin beta chain (443 aa).

Positions 11, 69, 138, 142, 143, 144, 204, and 226 each coordinate GTP. E69 is a Mg(2+) binding site. The disordered stretch occupies residues 424–443; sequence QYQDATAEEEGEFEEEEGEN. Residues 429–443 show a composition bias toward acidic residues; sequence TAEEEGEFEEEEGEN.

It belongs to the tubulin family. As to quaternary structure, dimer of alpha and beta chains. A typical microtubule is a hollow water-filled tube with an outer diameter of 25 nm and an inner diameter of 15 nM. Alpha-beta heterodimers associate head-to-tail to form protofilaments running lengthwise along the microtubule wall with the beta-tubulin subunit facing the microtubule plus end conferring a structural polarity. Microtubules usually have 13 protofilaments but different protofilament numbers can be found in some organisms and specialized cells. It depends on Mg(2+) as a cofactor. Post-translationally, some glutamate residues at the C-terminus are either polyglutamylated or polyglycylated. These 2 modifications occur exclusively on glutamate residues and result in either polyglutamate or polyglycine chains on the gamma-carboxyl group. Both modifications can coexist on the same protein on adjacent residues, and lowering polyglycylation levels increases polyglutamylation, and reciprocally. The precise function of such modifications is still unclear but they regulate the assembly and dynamics of axonemal microtubules.

It localises to the cytoplasm. The protein localises to the cytoskeleton. Its function is as follows. Tubulin is the major constituent of microtubules, a cylinder consisting of laterally associated linear protofilaments composed of alpha- and beta-tubulin heterodimers. Microtubules grow by the addition of GTP-tubulin dimers to the microtubule end, where a stabilizing cap forms. Below the cap, tubulin dimers are in GDP-bound state, owing to GTPase activity of alpha-tubulin. The protein is Tubulin beta chain (BTU1) of Tetrahymena thermophila.